Consider the following 308-residue polypeptide: Porphobilinogen deaminase (308 aa).

S-(dipyrrolylmethanemethyl)cysteine is present on Cys-240.

It belongs to the HMBS family. In terms of assembly, monomer. Requires dipyrromethane as cofactor.

The catalysed reaction is 4 porphobilinogen + H2O = hydroxymethylbilane + 4 NH4(+). It functions in the pathway porphyrin-containing compound metabolism; protoporphyrin-IX biosynthesis; coproporphyrinogen-III from 5-aminolevulinate: step 2/4. In terms of biological role, tetrapolymerization of the monopyrrole PBG into the hydroxymethylbilane pre-uroporphyrinogen in several discrete steps. This chain is Porphobilinogen deaminase, found in Campylobacter lari (strain RM2100 / D67 / ATCC BAA-1060).